The primary structure comprises 245 residues: Demethylmenaquinone methyltransferase (245 aa).

S-adenosyl-L-methionine is bound by residues threonine 69, aspartate 90, and 118–119 (DC).

This sequence belongs to the class I-like SAM-binding methyltransferase superfamily. MenG/UbiE family.

The enzyme catalyses a 2-demethylmenaquinol + S-adenosyl-L-methionine = a menaquinol + S-adenosyl-L-homocysteine + H(+). It functions in the pathway quinol/quinone metabolism; menaquinone biosynthesis; menaquinol from 1,4-dihydroxy-2-naphthoate: step 2/2. Methyltransferase required for the conversion of demethylmenaquinol (DMKH2) to menaquinol (MKH2). The chain is Demethylmenaquinone methyltransferase from Porphyromonas gingivalis (strain ATCC 33277 / DSM 20709 / CIP 103683 / JCM 12257 / NCTC 11834 / 2561).